The sequence spans 236 residues: Spore wall protein 12 (236 aa).

The tract at residues 169-188 is disordered; that stretch reads KKSKEPKTPSMVSRENDMER.

The protein belongs to the SWP12 family.

It localises to the spore wall. This Encephalitozoon cuniculi (strain GB-M1) (Microsporidian parasite) protein is Spore wall protein 12 (SWP12).